The primary structure comprises 878 residues: Leucine--tRNA ligase (878 aa).

Positions 56-66 (PYPSGKLHMGH) match the 'HIGH' region motif. Positions 630–634 (KMSKS) match the 'KMSKS' region motif. Lysine 633 lines the ATP pocket.

It belongs to the class-I aminoacyl-tRNA synthetase family.

It localises to the cytoplasm. The enzyme catalyses tRNA(Leu) + L-leucine + ATP = L-leucyl-tRNA(Leu) + AMP + diphosphate. The protein is Leucine--tRNA ligase of Prochlorococcus marinus (strain MIT 9313).